We begin with the raw amino-acid sequence, 930 residues long: Short transient receptor potential channel 6 (930 aa).

The tract at residues 1–27 (MSQSPRFVTRRGGSLKAAPGAGTRRNE) is disordered. Over 1–437 (MSQSPRFVTR…CSKMGKILRG (437 aa)) the chain is Cytoplasmic. ANK repeat units follow at residues 96-125 (IEEERFLDAAEYGNIPVVRKMLEECHSLNV), 131-160 (MGQNALQLAVANEHLEITELLLKKENLSRV), 162-188 (DALLLAISKGYVRIVEAILNHPAFAEG), and 217-246 (HDVTPIILAAHCQEYEIVHTLLRKGARIER). A helical transmembrane segment spans residues 438–458 (PFMKFVAHAASFTIFLGLLVM). At 459-486 (NAADRFEGTKLLPNETSTDNARQLFRMK) the chain is on the extracellular side. Residues 487–507 (TSCFSWMEMLIISWVIGMIWA) traverse the membrane as a helical segment. Topologically, residues 508-520 (ECKEIWTQGPKEY) are cytoplasmic. A helical transmembrane segment spans residues 521–541 (LFELWNMLDFGMLAIFAASFI). Residues 542–591 (ARFMAFWHASKAQSIIDANDTLKDLTKVTLGDNVKYYNLARIKWDPTDPQ) lie on the Extracellular side of the membrane. N-linked (GlcNAc...) asparagine glycosylation occurs at Asn560. A helical transmembrane segment spans residues 592-612 (IISEGLYAIAVVLSFSRIAYI). At 613–635 (LPANESFGPLQISLGRTVKDIFK) the chain is on the cytoplasmic side. The helical transmembrane segment at 636-656 (FMVIFIMVFVAFMIGMFNLYS) threads the bilayer. The Extracellular portion of the chain corresponds to 657–705 (YYIGAKQNEAFTTVEESFKTLFWAIFGLSEVKSVVINYNHKFIENIGYV). A helical membrane pass occupies residues 706 to 726 (LYGVYNVTMVIVLLNMLIAMI). Topologically, residues 727–930 (NSSFQEIEDD…LEPKLEESRR (204 aa)) are cytoplasmic. Ser814 carries the phosphoserine modification.

This sequence belongs to the transient receptor (TC 1.A.4) family. STrpC subfamily. TRPC6 sub-subfamily. Homodimer; forms channel complex. Interacts with MX1 and RNF24. In terms of processing, phosphorylated by FYN, leading to an increase of TRPC6 channel activity. Post-translationally, N-glycosylated. Lung and brain.

It localises to the cell membrane. The enzyme catalyses Ca(2+)(in) = Ca(2+)(out). In terms of biological role, forms a receptor-activated non-selective calcium permeant cation channel. Probably is operated by a phosphatidylinositol second messenger system activated by receptor tyrosine kinases or G-protein coupled receptors. Activated by diacylglycerol (DAG) in a membrane-delimited fashion, independently of protein kinase C. Seems not to be activated by intracellular calcium store depletion. This Mus musculus (Mouse) protein is Short transient receptor potential channel 6.